Reading from the N-terminus, the 432-residue chain is Adenylosuccinate synthetase 1 (432 aa).

Residues 12-18 (GDEGKGR) and 40-42 (GHT) contribute to the GTP site. D13 (proton acceptor) is an active-site residue. Mg(2+) is bound by residues D13 and G40. IMP contacts are provided by residues 13 to 16 (DEGK), 38 to 41 (NAGH), T128, R142, Q222, T237, and R301. H41 functions as the Proton donor in the catalytic mechanism. Substrate is bound at residue 297–303 (TNTGRPR). GTP contacts are provided by residues R303, 329-331 (KLD), and 411-413 (STG).

This sequence belongs to the adenylosuccinate synthetase family. In terms of assembly, homodimer. The cofactor is Mg(2+).

The protein localises to the cytoplasm. The catalysed reaction is IMP + L-aspartate + GTP = N(6)-(1,2-dicarboxyethyl)-AMP + GDP + phosphate + 2 H(+). It functions in the pathway purine metabolism; AMP biosynthesis via de novo pathway; AMP from IMP: step 1/2. Its function is as follows. Plays an important role in the de novo pathway of purine nucleotide biosynthesis. Catalyzes the first committed step in the biosynthesis of AMP from IMP. The chain is Adenylosuccinate synthetase 1 from Chromobacterium violaceum (strain ATCC 12472 / DSM 30191 / JCM 1249 / CCUG 213 / NBRC 12614 / NCIMB 9131 / NCTC 9757 / MK).